Reading from the N-terminus, the 165-residue chain is MNLFCISLEGSMDSLYEPIPEQQANQENMSSRTDSPIPPFGESEQTPNNLFVGVSNLENAKPKKRKLFRRFMSENKIFEGKTVNDKIWQEHSKHKNDSHIRRPCQLKDLNENDFLSNNIHTYQGKTLQGTSYQVTSECWSPFHYQRHVETTVDELVRHFFPDVTI.

The span at 22–34 (QQANQENMSSRTD) shows a compositional bias: polar residues. The segment at 22–45 (QQANQENMSSRTDSPIPPFGESEQ) is disordered.

This is an uncharacterized protein from Homo sapiens (Human).